We begin with the raw amino-acid sequence, 258 residues long: Aspartate/glutamate leucyltransferase (258 aa).

Belongs to the R-transferase family. Bpt subfamily.

It localises to the cytoplasm. The enzyme catalyses N-terminal L-glutamyl-[protein] + L-leucyl-tRNA(Leu) = N-terminal L-leucyl-L-glutamyl-[protein] + tRNA(Leu) + H(+). The catalysed reaction is N-terminal L-aspartyl-[protein] + L-leucyl-tRNA(Leu) = N-terminal L-leucyl-L-aspartyl-[protein] + tRNA(Leu) + H(+). Its function is as follows. Functions in the N-end rule pathway of protein degradation where it conjugates Leu from its aminoacyl-tRNA to the N-termini of proteins containing an N-terminal aspartate or glutamate. This is Aspartate/glutamate leucyltransferase from Rhodopseudomonas palustris (strain BisA53).